The sequence spans 430 residues: 3-phosphoshikimate 1-carboxyvinyltransferase (430 aa).

The 3-phosphoshikimate site is built by Lys-21, Ser-22, and Arg-26. Phosphoenolpyruvate is bound at residue Lys-21. Positions 92 and 120 each coordinate phosphoenolpyruvate. 6 residues coordinate 3-phosphoshikimate: Ser-165, Ser-166, Gln-167, Ser-193, Asp-314, and Lys-341. Gln-167 is a binding site for phosphoenolpyruvate. The active-site Proton acceptor is the Asp-314. Residues Arg-345, Arg-386, and Lys-411 each coordinate phosphoenolpyruvate.

This sequence belongs to the EPSP synthase family. As to quaternary structure, monomer.

The protein resides in the cytoplasm. The enzyme catalyses 3-phosphoshikimate + phosphoenolpyruvate = 5-O-(1-carboxyvinyl)-3-phosphoshikimate + phosphate. It participates in metabolic intermediate biosynthesis; chorismate biosynthesis. In terms of biological role, catalyzes the transfer of the enolpyruvyl moiety of phosphoenolpyruvate (PEP) to the 5-hydroxyl of shikimate-3-phosphate (S3P) to produce enolpyruvyl shikimate-3-phosphate and inorganic phosphate. The polypeptide is 3-phosphoshikimate 1-carboxyvinyltransferase (Methanospirillum hungatei JF-1 (strain ATCC 27890 / DSM 864 / NBRC 100397 / JF-1)).